An 801-amino-acid chain; its full sequence is MDEDEFELQPQEPNSFFDGIGADATHMDGDQIVVEIQEAVFVSNIVDSDITVHNFVPDDPDSVVIQDVVEDVVIEEDVQCSDILEEADVSENVIIPEQVLDSDVTEEVSLPHCTVPDDVLASDITSTSMSMPEHVLTSESMHVCDIGHVEHMVHDSVVEAEIITDPLTSDIVSEEVLVADCAPEAVIDASGISVDQQDNDKASCEDYLMISLDDAGKIEHDGSTGVTIDAESEMDPCKVDSTCPEVIKVYIFKADPGEDDLGGTVDIVESEPENDHGVELLDQNSSIRVPREKMVYMTVNDSQQEDEDLNVAEIADEVYMEVIVGEEDAAVAAAAAAVHEQQIDEDEMKTFVPIAWAAAYGNNSDGIENRNGTASALLHIDESAGLGRLAKQKPKKKRRPDSRQYQTAIIIGPDGHPLTVYPCMICGKKFKSRGFLKRHMKNHPEHLAKKKYHCTDCDYTTNKKISLHNHLESHKLTSKAEKAIECDECGKHFSHAGALFTHKMVHKEKGANKMHKCKFCEYETAEQGLLNRHLLAVHSKNFPHICVECGKGFRHPSELRKHMRIHTGEKPYQCQYCEYRSADSSNLKTHIKTKHSKEMPFKCDICLLTFSDTKEVQQHTLVHQESKTHQCLHCDHKSSNSSDLKRHVISVHTKDYPHKCEMCEKGFHRPSELKKHVAVHKGKKMHQCRHCDFKIADPFVLSRHILSVHTKDLPFRCKRCRKGFRQQNELKKHMKTHSGRKVYQCEYCEYSTTDASGFKRHVISIHTKDYPHRCEYCKKGFRRPSEKNQHIMRHHKEVGLP.

S270 carries the post-translational modification Phosphoserine. The C2H2-type 1 zinc-finger motif lies at 421-443 (YPCMICGKKFKSRGFLKRHMKNH). The segment at 452–474 (YHCTDCDYTTNKKISLHNHLESH) adopts a C2H2-type 2; atypical zinc-finger fold. 11 C2H2-type zinc fingers span residues 484-506 (IECD…KMVH), 515-538 (HKCK…LAVH), 544-566 (HICV…MRIH), 572-595 (YQCQ…KTKH), 601-623 (FKCD…TLVH), 629-652 (HQCL…ISVH), 658-680 (HKCE…VAVH), 686-709 (HQCR…LSVH), 715-737 (FRCK…MKTH), 743-766 (YQCE…ISIH), and 772-795 (HRCE…MRHH).

Belongs to the krueppel C2H2-type zinc-finger protein family. ZFX/ZFY subfamily.

It localises to the nucleus. Functionally, probable transcriptional activator. Binds to the consensus sequence 5'-AGGCCY-3'. The chain is Zinc finger Y-chromosomal protein (ZFY) from Homo sapiens (Human).